The following is a 305-amino-acid chain: Achromobactin-binding periplasmic protein (305 aa).

The first 29 residues, 1 to 29 (MNEYLVSRRRLLRLSLSLLPLGLGRPALA), serve as a signal peptide directing secretion. Positions 37–302 (RVITLFQGAT…DIARVTGIAG (266 aa)) constitute a Fe/B12 periplasmic-binding domain.

The protein belongs to the bacterial solute-binding protein 8 family.

Its subcellular location is the periplasm. Functionally, binds citrate- or chloride-dependent Fe(3+); part of the binding-protein-dependent transport system CbrABCD for uptake of the siderophore achromobactin. In Dickeya dadantii (strain 3937) (Erwinia chrysanthemi (strain 3937)), this protein is Achromobactin-binding periplasmic protein (cbrA).